Reading from the N-terminus, the 517-residue chain is Tyrosine-protein kinase Fgr (517 aa).

G2 carries the N-myristoyl glycine lipid modification. 2 S-palmitoyl cysteine lipidation sites follow: C3 and C6. A compositionally biased stretch (basic and acidic residues) spans 17–33 (VGLEGDFRSQGAEERYY). A disordered region spans residues 17–46 (VGLEGDFRSQGAEERYYPDPTQGRSSSISP). A Phosphotyrosine modification is found at Y32. Position 50 is a phosphoserine (S50). Residues 65 to 126 (TGVTIFVALY…PSNYVAPVDS (62 aa)) form the SH3 domain. The SH2 domain maps to 132 to 229 (WYFGKISRKD…GLCYLLTAPC (98 aa)). The residue at position 196 (Y196) is a Phosphotyrosine. Position 206 is a phosphoserine (S206). The region spanning 251–504 (IALDRRLGTG…YLQSFLEDYF (254 aa)) is the Protein kinase domain. ATP is bound by residues 257 to 265 (LGTGCFGDV) and K279. D370 functions as the Proton acceptor in the catalytic mechanism. Y400 bears the Phosphotyrosine; by autocatalysis mark. Y511 is subject to Phosphotyrosine; by SRC.

It belongs to the protein kinase superfamily. Tyr protein kinase family. SRC subfamily. Interacts with ITGB1, ITGB2, MS4A2/FCER1B and FCGR2. Interacts (via SH2 domain) with SYK (tyrosine phosphorylated). Interacts (via SH2 domain) with FLT3 (tyrosine phosphorylated). Interacts with PTK2/FAK1. Interacts (via SH2 domain) with HCLS1 (tyrosine phosphorylated by SYK). Interacts with SIRPA and PTPNS1. Interacts (not phosphorylated on tyrosine residues) with CBL; FGR tyrosine phosphorylation promotes dissociation. Interacts with CLNK. Ubiquitinated. Becomes ubiquitinated in response to ITGB2 signaling; this does not lead to degradation. In terms of processing, phosphorylated. Autophosphorylated on tyrosine residues. Becomes phosphorylated in response to FCGR2 engagement, cell adhesion and signaling by ITGB2. Prior phosphorylation at Tyr-511 by SRC inhibits ulterior autophosphorylation at Tyr-400. As to expression, detected in brain cortex (at protein level).

It localises to the cell membrane. The protein resides in the cell projection. The protein localises to the ruffle membrane. It is found in the cytoplasm. Its subcellular location is the cytosol. It localises to the cytoskeleton. The protein resides in the mitochondrion inner membrane. The protein localises to the mitochondrion intermembrane space. It carries out the reaction L-tyrosyl-[protein] + ATP = O-phospho-L-tyrosyl-[protein] + ADP + H(+). With respect to regulation, activated by autophosphorylation. Prior phosphorylation at Tyr-511 by SRC inhibits ulterior autophosphorylation at Tyr-400. Activated by phorbol myristate acetate, phosphatidic acid and poly-Lys. Binding (via SH2 domain) of HCLS1 that is already phosphorylated by SYK strongly increases kinase activity. Non-receptor tyrosine-protein kinase that transmits signals from cell surface receptors devoid of kinase activity and contributes to the regulation of immune responses, including neutrophil, monocyte, macrophage and mast cell functions, cytoskeleton remodeling in response to extracellular stimuli, phagocytosis, cell adhesion and migration. Promotes mast cell degranulation, release of inflammatory cytokines and IgE-mediated anaphylaxis. Acts downstream of receptors that bind the Fc region of immunoglobulins, such as MS4A2/FCER1B, FCER1G and FCGR2. Acts downstream of ITGB1 and ITGB2, and regulates actin cytoskeleton reorganization, cell spreading and adhesion. Depending on the context, activates or inhibits cellular responses. Functions as a negative regulator of ITGB2 signaling, phagocytosis and SYK activity in monocytes. Required for normal ITGB1 and ITGB2 signaling, normal cell spreading and adhesion in neutrophils and macrophages. Functions as a positive regulator of cell migration and regulates cytoskeleton reorganization via RAC1 activation. Phosphorylates SYK (in vitro) and promotes SYK-dependent activation of AKT1 and MAP kinase signaling. Phosphorylates PLD2 in antigen-stimulated mast cells, leading to PLD2 activation and the production of the signaling molecules lysophosphatidic acid and diacylglycerol. Promotes activation of PIK3R1. Phosphorylates FASLG, and thereby regulates its ubiquitination and subsequent internalization. Phosphorylates ABL1. Promotes phosphorylation of CBL, CTTN, PIK3R1, PTK2/FAK1, PTK2B/PYK2 and VAV2. Phosphorylates HCLS1 that has already been phosphorylated by SYK, but not unphosphorylated HCLS1. Together with CLNK, it acts as a negative regulator of natural killer cell-activating receptors and inhibits interferon-gamma production. This is Tyrosine-protein kinase Fgr (Fgr) from Rattus norvegicus (Rat).